Consider the following 37-residue polypeptide: Large ribosomal subunit protein bL36c (37 aa).

In terms of assembly, component of the chloroplast large ribosomal subunit (LSU). Mature 70S chloroplast ribosomes of higher plants consist of a small (30S) and a large (50S) subunit. The 30S small subunit contains 1 molecule of ribosomal RNA (16S rRNA) and 24 different proteins. The 50S large subunit contains 3 rRNA molecules (23S, 5S and 4.5S rRNA) and 33 different proteins.

It localises to the plastid. The protein resides in the chloroplast. Component of the chloroplast ribosome (chloro-ribosome), a dedicated translation machinery responsible for the synthesis of chloroplast genome-encoded proteins, including proteins of the transcription and translation machinery and components of the photosynthetic apparatus. The polypeptide is Large ribosomal subunit protein bL36c (rpl36) (Spinacia oleracea (Spinach)).